A 596-amino-acid polypeptide reads, in one-letter code: Nodulation outer protein X (596 aa).

The protein localises to the secreted. This chain is Nodulation outer protein X (nopX), found in Sinorhizobium fredii (strain NBRC 101917 / NGR234).